Here is a 411-residue protein sequence, read N- to C-terminus: Putative metal tolerance protein C3 (411 aa).

The Cytoplasmic segment spans residues 1-115; that stretch reads MEVNYCPETP…DRAERAAQEL (115 aa). The chain crosses the membrane as a helical span at residues 116–136; that stretch reads AMQISNWANIFLLALKIYATV. Topologically, residues 137-140 are vacuolar; it reads KSGS. Residues 141–161 traverse the membrane as a helical segment; the sequence is IAIAASTLDSLLDLMAGGILW. Over 162–184 the chain is Cytoplasmic; the sequence is FTHLSMKNVNIYKYPIGKLRVQP. Residues 185–205 form a helical membrane-spanning segment; the sequence is VGIIIFAAVMATLGFQVLLVA. The Vacuolar segment spans residues 206-222; that stretch reads AEQLISNEPSEKMNHVQ. Residues 223 to 243 traverse the membrane as a helical segment; the sequence is LIWLYSIMLSATAIKLVLWIY. Over 244–262 the chain is Cytoplasmic; that stretch reads CKSSRNHIVRAYAKDHHFD. The helical transmembrane segment at 263 to 283 threads the bilayer; the sequence is VVTNVLGLVAAVLANAFYWWL. Over 284–287 the chain is Vacuolar; it reads DPTG. The chain crosses the membrane as a helical span at residues 288-308; sequence AILLAIYTIVNWSGTVMENAV. The Cytoplasmic segment spans residues 309-390; that stretch reads SLIGQSAPPE…LPEVERAFVH (82 aa).

It belongs to the cation diffusion facilitator (CDF) transporter (TC 2.A.4) family.

Its subcellular location is the vacuole membrane. Functionally, involved in sequestration of excess metal in the cytoplasm into vacuoles to maintain metal homeostasis. The chain is Putative metal tolerance protein C3 (MTPC3) from Arabidopsis thaliana (Mouse-ear cress).